The sequence spans 441 residues: Malate dehydrogenase [NADP], chloroplastic (441 aa).

A chloroplast-targeting transit peptide spans 1–51 (MAVAELSPSYKTQLKTCQQLSSSLSTRLSDHRKFSLRLLPRPVSVRGGIRC). Cys-75 and Cys-80 are oxidised to a cystine. 104-110 (GAAGMIS) lines the NADP(+) pocket. Residues Arg-185 and Arg-191 each coordinate substrate. Asn-198 contacts NADP(+). Residue Gln-205 coordinates NAD(+). 222-224 (VGN) is an NADP(+) binding site. Asn-224 and Arg-255 together coordinate substrate. Catalysis depends on His-280, which acts as the Proton acceptor. An intrachain disulfide couples Cys-416 to Cys-428.

It belongs to the LDH/MDH superfamily. MDH type 2 family. As to quaternary structure, homodimer.

It is found in the plastid. The protein localises to the chloroplast. It carries out the reaction (S)-malate + NADP(+) = oxaloacetate + NADPH + H(+). Its activity is regulated as follows. Chloroplast NADP-MDH is activated upon illumination. In order to be enzymatically active, disulfide bridges on the protein must be reduced by thioredoxin which receives electrons from ferredoxin and the electron transport system of photosynthesis. Its function is as follows. The chloroplastic, NADP-dependent form is essential for the photosynthesis C4 cycle, which allows plants to circumvent the problem of photorespiration. In C4 plants, NADP-MDH activity acts to convert oxaloacetate to malate in chloroplasts of mesophyll cells for transport to the bundle sheath cells. In Mesembryanthemum crystallinum (Common ice plant), this protein is Malate dehydrogenase [NADP], chloroplastic (MDH1).